The chain runs to 390 residues: Chorismate synthase (390 aa).

The NADP(+) site is built by Arg39 and Arg45. Residues 132–134 (RSS), 253–254 (NA), Gly298, 313–317 (KPIPT), and Arg339 contribute to the FMN site.

This sequence belongs to the chorismate synthase family. As to quaternary structure, homotetramer. FMNH2 is required as a cofactor.

The enzyme catalyses 5-O-(1-carboxyvinyl)-3-phosphoshikimate = chorismate + phosphate. The protein operates within metabolic intermediate biosynthesis; chorismate biosynthesis; chorismate from D-erythrose 4-phosphate and phosphoenolpyruvate: step 7/7. In terms of biological role, catalyzes the anti-1,4-elimination of the C-3 phosphate and the C-6 proR hydrogen from 5-enolpyruvylshikimate-3-phosphate (EPSP) to yield chorismate, which is the branch point compound that serves as the starting substrate for the three terminal pathways of aromatic amino acid biosynthesis. This reaction introduces a second double bond into the aromatic ring system. The chain is Chorismate synthase from Bacillus licheniformis (strain ATCC 14580 / DSM 13 / JCM 2505 / CCUG 7422 / NBRC 12200 / NCIMB 9375 / NCTC 10341 / NRRL NRS-1264 / Gibson 46).